Here is a 358-residue protein sequence, read N- to C-terminus: Insulin gene enhancer protein isl-2b (358 aa).

2 consecutive LIM zinc-binding domains span residues 27-80 (CVGC…CKRD) and 89-143 (CAKC…RADH). A DNA-binding region (homeobox) is located at residues 191 to 250 (TTRVRTVLNEKQLHTLRTCYNANPRPDALMKEQLVEMTGLSPRVIRVWFQNKRCKDKKRS). Residues 325–335 (ESGSLGNSSGS) are compositionally biased toward low complexity. A disordered region spans residues 325–358 (ESGSLGNSSGSDVTSLSSQLPDTPNSMVPSPVET). The span at 336-358 (DVTSLSSQLPDTPNSMVPSPVET) shows a compositional bias: polar residues.

It localises to the nucleus. Binds to one of the cis-acting domain of the insulin gene enhancer. May be involved in the regional specification of the myotome and also in target recognition by the caudal primary neuron. This chain is Insulin gene enhancer protein isl-2b (isl2b), found in Danio rerio (Zebrafish).